The following is a 208-amino-acid chain: MFIKICGIKTPEELEIVENYGNATGVILECVSKRRIGFETAKNLVNLANIPVFAVSTTSDVSVWENIIELTGTNYLQMHSDIDQKAIDFIKNEYGCFIMKSFKIPEKSESPENDAQKIISDIESYEVDRILLDTGKGCGQTHDHRISQILAKKFDIVLAGGLDPDNVLKIVKTVKPFGVDVSSGVENNNSKDEELIKRFCENVKSVKL.

This sequence belongs to the TrpF family.

It catalyses the reaction N-(5-phospho-beta-D-ribosyl)anthranilate = 1-(2-carboxyphenylamino)-1-deoxy-D-ribulose 5-phosphate. It participates in amino-acid biosynthesis; L-tryptophan biosynthesis; L-tryptophan from chorismate: step 3/5. The protein is N-(5'-phosphoribosyl)anthranilate isomerase of Methanococcus maripaludis (strain C5 / ATCC BAA-1333).